The sequence spans 352 residues: S-adenosylmethionine:tRNA ribosyltransferase-isomerase (352 aa).

This sequence belongs to the QueA family. In terms of assembly, monomer.

It is found in the cytoplasm. It catalyses the reaction 7-aminomethyl-7-carbaguanosine(34) in tRNA + S-adenosyl-L-methionine = epoxyqueuosine(34) in tRNA + adenine + L-methionine + 2 H(+). It participates in tRNA modification; tRNA-queuosine biosynthesis. In terms of biological role, transfers and isomerizes the ribose moiety from AdoMet to the 7-aminomethyl group of 7-deazaguanine (preQ1-tRNA) to give epoxyqueuosine (oQ-tRNA). This is S-adenosylmethionine:tRNA ribosyltransferase-isomerase from Gloeobacter violaceus (strain ATCC 29082 / PCC 7421).